The chain runs to 156 residues: Small ribosomal subunit protein uS7 (156 aa).

It belongs to the universal ribosomal protein uS7 family. Part of the 30S ribosomal subunit. Contacts proteins S9 and S11.

One of the primary rRNA binding proteins, it binds directly to 16S rRNA where it nucleates assembly of the head domain of the 30S subunit. Is located at the subunit interface close to the decoding center, probably blocks exit of the E-site tRNA. This is Small ribosomal subunit protein uS7 from Kocuria rhizophila (strain ATCC 9341 / DSM 348 / NBRC 103217 / DC2201).